Consider the following 310-residue polypeptide: 26S proteasome non-ATPase regulatory subunit 14 (310 aa).

The MPN domain occupies 31–166; that stretch reads VYISSLALLK…IDAFRLINAN (136 aa). Positions 113, 115, and 126 each coordinate Zn(2+). The short motif at 113–126 is the JAMM motif element; the sequence is HSHPGFGCWLSGVD. Phosphoserine occurs at positions 150 and 224. Phosphothreonine is present on T266.

This sequence belongs to the peptidase M67A family. PSMD14 subfamily. As to quaternary structure, component of the 19S proteasome regulatory particle complex. The 26S proteasome consists of a 20S core particle (CP) and two 19S regulatory subunits (RP). The regulatory particle is made of a lid composed of 9 subunits including PSMD4, a base containing 6 ATPases and few additional components. Within the complex, PSMD4 interacts with subunit PSMD7 through their respective MPN domain. Interacts with TXNL1. In terms of tissue distribution, widely expressed. Highest levels in heart and skeletal muscle.

Component of the 26S proteasome, a multiprotein complex involved in the ATP-dependent degradation of ubiquitinated proteins. This complex plays a key role in the maintenance of protein homeostasis by removing misfolded or damaged proteins, which could impair cellular functions, and by removing proteins whose functions are no longer required. Therefore, the proteasome participates in numerous cellular processes, including cell cycle progression, apoptosis, or DNA damage repair. The PSMD14 subunit is a metalloprotease that specifically cleaves 'Lys-63'-linked polyubiquitin chains within the complex. Plays a role in response to double-strand breaks (DSBs): acts as a regulator of non-homologous end joining (NHEJ) by cleaving 'Lys-63'-linked polyubiquitin, thereby promoting retention of JMJD2A/KDM4A on chromatin and restricting TP53BP1 accumulation. Also involved in homologous recombination repair by promoting RAD51 loading. The sequence is that of 26S proteasome non-ATPase regulatory subunit 14 (PSMD14) from Homo sapiens (Human).